A 763-amino-acid chain; its full sequence is MAP7 domain-containing protein 2 (763 aa).

Residues 1–11 are compositionally biased toward gly residues; that stretch reads MERGGGGGFGT. Disordered regions lie at residues 1 to 63, 96 to 124, 149 to 268, and 300 to 540; these read MERG…KERR, WRKL…LREE, SWGA…DVGK, and PLRR…KQKE. Residues 52 to 63 are compositionally biased toward basic and acidic residues; sequence SGERQRLAKERR. Residues 54–147 are a coiled coil; it reads ERQRLAKERR…RTQQLELKKK (94 aa). Positions 192–206 are enriched in polar residues; that stretch reads ESTNACDKLSTSTMS. Basic and acidic residues-rich tracts occupy residues 355 to 371, 385 to 400, and 430 to 540; these read MPKR…EREG, ALEK…EKHA, and LAEK…KQKE.

This sequence belongs to the MAP7 family. Interacts (via N-terminus) with microtubules; facilitates microtubule stabilization. Interacts with kinesin-1 family members, KIF5A, KIF5B and KIF5C.

The protein resides in the cytoplasm. Its subcellular location is the cytoskeleton. It is found in the microtubule organizing center. It localises to the centrosome. The protein localises to the midbody. The protein resides in the cell projection. Its subcellular location is the neuron projection. It is found in the axon. Microtubule-stabilizing protein involved in the control of cell motility and neurite outgrowth. Acts as a critical cofactor for kinesin transport; in the proximal axon regulates kinesin-1 family members, KIF5A, KIF5B and KIF5C recruitment to microtubules and contributes to kinesin-1-mediated transport in the axons. The polypeptide is MAP7 domain-containing protein 2 (MAP7D2) (Pongo abelii (Sumatran orangutan)).